Consider the following 540-residue polypeptide: 2,3-bisphosphoglycerate-independent phosphoglycerate mutase (540 aa).

Mn(2+) is bound by residues Asp-13 and Ser-63. Ser-63 (phosphoserine intermediate) is an active-site residue. Substrate contacts are provided by residues His-124, Arg-154 to Asp-155, Arg-186, Arg-192, Arg-262 to Arg-265, and Lys-356. The Mn(2+) site is built by Asp-423, His-427, Asp-464, His-465, and His-483.

This sequence belongs to the BPG-independent phosphoglycerate mutase family. Monomer. Requires Mn(2+) as cofactor.

The enzyme catalyses (2R)-2-phosphoglycerate = (2R)-3-phosphoglycerate. Its pathway is carbohydrate degradation; glycolysis; pyruvate from D-glyceraldehyde 3-phosphate: step 3/5. Its function is as follows. Catalyzes the interconversion of 2-phosphoglycerate and 3-phosphoglycerate. The protein is 2,3-bisphosphoglycerate-independent phosphoglycerate mutase of Chloroflexus aggregans (strain MD-66 / DSM 9485).